Reading from the N-terminus, the 233-residue chain is UPF0502 protein Sden_2282 (233 aa).

The segment covering 178-198 (TQHQRPPQTPHLSSRTNVDNS) has biased composition (polar residues). The interval 178–204 (TQHQRPPQTPHLSSRTNVDNSYESDER) is disordered.

Belongs to the UPF0502 family.

In Shewanella denitrificans (strain OS217 / ATCC BAA-1090 / DSM 15013), this protein is UPF0502 protein Sden_2282.